Reading from the N-terminus, the 491-residue chain is Tryptophan 5-hydroxylase 2 (491 aa).

Position 19 is a phosphoserine (serine 19). The tract at residues 33-63 (NLTVNKSNSGKNDDKKGNKGSSRSETAPDSG) is disordered. Residues 66–141 (AVVFSLRNEV…TIVTLNPPEN (76 aa)) form the ACT domain. 3 residues coordinate Fe cation: histidine 319, histidine 324, and glutamate 364.

It belongs to the biopterin-dependent aromatic amino acid hydroxylase family. As to quaternary structure, interacts with DNAJC12. Fe(2+) is required as a cofactor.

It catalyses the reaction (6R)-L-erythro-5,6,7,8-tetrahydrobiopterin + L-tryptophan + O2 = 5-hydroxy-L-tryptophan + (4aS,6R)-4a-hydroxy-L-erythro-5,6,7,8-tetrahydrobiopterin. The protein operates within aromatic compound metabolism; serotonin biosynthesis; serotonin from L-tryptophan: step 1/2. This is Tryptophan 5-hydroxylase 2 (TPH2) from Equus caballus (Horse).